Here is a 307-residue protein sequence, read N- to C-terminus: Malate dehydrogenase (307 aa).

NAD(+) contacts are provided by residues G8–G13 and D32. Substrate-binding residues include R81 and R87. NAD(+) is bound by residues N94 and V117–N119. Positions 119 and 150 each coordinate substrate. H174 acts as the Proton acceptor in catalysis.

Belongs to the LDH/MDH superfamily. MDH type 3 family.

The catalysed reaction is (S)-malate + NAD(+) = oxaloacetate + NADH + H(+). Catalyzes the reversible oxidation of malate to oxaloacetate. The sequence is that of Malate dehydrogenase from Dehalococcoides mccartyi (strain ATCC BAA-2100 / JCM 16839 / KCTC 5957 / BAV1).